We begin with the raw amino-acid sequence, 294 residues long: ADP-ribosyl-[dinitrogen reductase] glycohydrolase (294 aa).

ADP-D-ribose contacts are provided by residues 100 to 102 (NTC), Glu-121, His-158, and Tyr-212. Mn(2+) is bound by residues Asp-243, Asp-245, and Thr-246.

It belongs to the ADP-ribosylglycohydrolase family. In terms of assembly, monomer. Mn(2+) is required as a cofactor.

It is found in the cytoplasm. It carries out the reaction N(omega)-alpha-(ADP-D-ribosyl)-L-arginyl-[dinitrogen reductase] + H2O = L-arginyl-[dinitrogen reductase] + ADP-D-ribose. Functionally, involved in the regulation of nitrogen fixation activity by the reversible ADP-ribosylation of one subunit of the homodimeric dinitrogenase reductase component of the nitrogenase enzyme complex. The ADP-ribosyltransferase (DraT) transfers the ADP-ribose group from NAD to dinitrogenase reductase. The ADP-ribose group is removed through the action of the ADP-ribosylglycohydrolase (DraG, this entry). This chain is ADP-ribosyl-[dinitrogen reductase] glycohydrolase, found in Rhodospirillum rubrum.